A 171-amino-acid chain; its full sequence is 3-hydroxydecanoyl-[acyl-carrier-protein] dehydratase (171 aa).

His-70 is a catalytic residue.

Belongs to the thioester dehydratase family. FabA subfamily. In terms of assembly, homodimer.

It is found in the cytoplasm. It catalyses the reaction a (3R)-hydroxyacyl-[ACP] = a (2E)-enoyl-[ACP] + H2O. The enzyme catalyses (3R)-hydroxydecanoyl-[ACP] = (2E)-decenoyl-[ACP] + H2O. The catalysed reaction is (2E)-decenoyl-[ACP] = (3Z)-decenoyl-[ACP]. Its pathway is lipid metabolism; fatty acid biosynthesis. Its function is as follows. Necessary for the introduction of cis unsaturation into fatty acids. Catalyzes the dehydration of (3R)-3-hydroxydecanoyl-ACP to E-(2)-decenoyl-ACP and then its isomerization to Z-(3)-decenoyl-ACP. Can catalyze the dehydratase reaction for beta-hydroxyacyl-ACPs with saturated chain lengths up to 16:0, being most active on intermediate chain length. The polypeptide is 3-hydroxydecanoyl-[acyl-carrier-protein] dehydratase (Photobacterium profundum (strain SS9)).